A 449-amino-acid polypeptide reads, in one-letter code: 1H-pyrrole-2-carbonyl-[peptidyl-carrier protein] chlorinase (449 aa).

Residues Ala16, Glu35, Arg41, His43, Val44, Ser47, Arg123, Ile147, and Asp316 each contribute to the FAD site. 2 residues coordinate chloride: Ser327 and Gly328. Val329 contacts FAD.

Belongs to the flavin-dependent halogenase family. In terms of assembly, homodimer.

It catalyses the reaction (1H-pyrrole-2-carbonyl)-[peptidyl-carrier protein] + 2 FADH2 + 2 chloride + 2 O2 = (4,5-dichloro-1H-pyrrole-2-carbonyl)-[peptidyl-carrier protein] + 2 FAD + 4 H2O. The enzyme catalyses (1H-pyrrole-2-carbonyl)-[peptidyl-carrier protein] + FADH2 + chloride + O2 = (5-chloro-1H-pyrrole-2-carbonyl)-[peptidyl-carrier protein] + FAD + 2 H2O. The catalysed reaction is (5-chloro-1H-pyrrole-2-carbonyl)-[peptidyl-carrier protein] + FADH2 + chloride + O2 = (4,5-dichloro-1H-pyrrole-2-carbonyl)-[peptidyl-carrier protein] + FAD + 2 H2O. Its pathway is antibiotic biosynthesis. In terms of biological role, involved in the biosynthesis of the antibiotic pyoluteorin. Catalyzes the dichlorination of the pyrrole ring of pyrrolyl-S-PltL, generating the 5-chloropyrrolyl-S-PltL intermediate and then the 4,5-dichloropyrrolyl-S-PltL product. The sequence is that of 1H-pyrrole-2-carbonyl-[peptidyl-carrier protein] chlorinase from Pseudomonas fluorescens (strain ATCC BAA-477 / NRRL B-23932 / Pf-5).